Reading from the N-terminus, the 192-residue chain is Protein GrpE (192 aa).

The tract at residues 1-34 (MSSKEQKTPNEQVSEEMENTAEQQVEATQETGEC) is disordered. Residues 20 to 31 (TAEQQVEATQET) show a composition bias toward polar residues.

The protein belongs to the GrpE family. In terms of assembly, homodimer.

The protein resides in the cytoplasm. In terms of biological role, participates actively in the response to hyperosmotic and heat shock by preventing the aggregation of stress-denatured proteins, in association with DnaK and GrpE. It is the nucleotide exchange factor for DnaK and may function as a thermosensor. Unfolded proteins bind initially to DnaJ; upon interaction with the DnaJ-bound protein, DnaK hydrolyzes its bound ATP, resulting in the formation of a stable complex. GrpE releases ADP from DnaK; ATP binding to DnaK triggers the release of the substrate protein, thus completing the reaction cycle. Several rounds of ATP-dependent interactions between DnaJ, DnaK and GrpE are required for fully efficient folding. This is Protein GrpE from Yersinia pestis.